Reading from the N-terminus, the 331-residue chain is Meiotic recombination protein P22 (331 aa).

The tract at residues 132–187 (NNIQKEVHQRNSQRRSIQCTPKKRGRKPKQPAKKLQSRISTDQLGSTPSPSKLPAK) is disordered. Residues 152–167 (PKKRGRKPKQPAKKLQ) are compositionally biased toward basic residues. A compositionally biased stretch (polar residues) spans 168–181 (SRISTDQLGSTPSP).

The protein belongs to the TOP6B-like family.

It is found in the chromosome. Required for formation of the mei-W68-mediated double-strand breaks (DSBs) that initiate meiotic recombination. In Drosophila melanogaster (Fruit fly), this protein is Meiotic recombination protein P22.